The following is a 117-amino-acid chain: Large ribosomal subunit protein bL20 (117 aa).

Belongs to the bacterial ribosomal protein bL20 family.

Functionally, binds directly to 23S ribosomal RNA and is necessary for the in vitro assembly process of the 50S ribosomal subunit. It is not involved in the protein synthesizing functions of that subunit. This Maridesulfovibrio salexigens (strain ATCC 14822 / DSM 2638 / NCIMB 8403 / VKM B-1763) (Desulfovibrio salexigens) protein is Large ribosomal subunit protein bL20.